The sequence spans 397 residues: 1-deoxy-D-xylulose 5-phosphate reductoisomerase (397 aa).

Threonine 12, glycine 13, serine 14, isoleucine 15, glycine 38, lysine 39, asparagine 40, and asparagine 126 together coordinate NADPH. Lysine 127 serves as a coordination point for 1-deoxy-D-xylulose 5-phosphate. Residue glutamate 128 coordinates NADPH. Aspartate 152 contributes to the Mn(2+) binding site. Residues serine 153, glutamate 154, serine 188, and histidine 211 each contribute to the 1-deoxy-D-xylulose 5-phosphate site. Glutamate 154 contacts Mn(2+). Glycine 217 provides a ligand contact to NADPH. 4 residues coordinate 1-deoxy-D-xylulose 5-phosphate: serine 224, asparagine 229, lysine 230, and glutamate 233. Glutamate 233 is a Mn(2+) binding site.

The protein belongs to the DXR family. Mg(2+) is required as a cofactor. The cofactor is Mn(2+).

It carries out the reaction 2-C-methyl-D-erythritol 4-phosphate + NADP(+) = 1-deoxy-D-xylulose 5-phosphate + NADPH + H(+). Its pathway is isoprenoid biosynthesis; isopentenyl diphosphate biosynthesis via DXP pathway; isopentenyl diphosphate from 1-deoxy-D-xylulose 5-phosphate: step 1/6. Catalyzes the NADPH-dependent rearrangement and reduction of 1-deoxy-D-xylulose-5-phosphate (DXP) to 2-C-methyl-D-erythritol 4-phosphate (MEP). In Haemophilus influenzae (strain 86-028NP), this protein is 1-deoxy-D-xylulose 5-phosphate reductoisomerase.